The chain runs to 681 residues: Endopolyphosphatase (681 aa).

The Cytoplasmic portion of the chain corresponds to 1 to 23 (MKELQLPEKRKSNTGLSWFPSPR). A helical; Signal-anchor for type II membrane protein transmembrane segment spans residues 24–44 (ILQVFLVLLGAIVAFLSFSAT). The Vacuolar segment spans residues 45-681 (SSIISSSPKH…RAFCSSGYED (637 aa)). N-linked (GlcNAc...) asparagine glycosylation is found at N127, N173, N309, and N487. Over residues 549 to 562 (KKKKKGKKGKKNKN) the composition is skewed to basic residues. Positions 549–585 (KKKKKGKKGKKNKNSKNWWKTDKTFPKKKPKNLPPGP) are disordered.

The protein belongs to the endopolyphosphatase PPN1 family. The cofactor is a divalent metal cation. In terms of processing, processing by proteases in the vacuole may be required for activation.

The protein resides in the vacuole membrane. It catalyses the reaction [phosphate](n+1) + n H2O = (n+1) phosphate + n H(+). In terms of biological role, catalyzes the hydrolysis of inorganic polyphosphate (polyP) chains of many hundreds of phosphate residues into shorter lengths. This is Endopolyphosphatase (PPN1) from Kluyveromyces lactis (strain ATCC 8585 / CBS 2359 / DSM 70799 / NBRC 1267 / NRRL Y-1140 / WM37) (Yeast).